A 274-amino-acid chain; its full sequence is Formamidopyrimidine-DNA glycosylase (274 aa).

The active-site Schiff-base intermediate with DNA is the proline 2. The active-site Proton donor is the glutamate 3. Lysine 58 serves as the catalytic Proton donor; for beta-elimination activity. The DNA site is built by histidine 91, arginine 110, and lysine 152. The segment at 237-271 (KVYGRKNLPCLVCENKIETVVIAGRHSAFCPHCQP) adopts an FPG-type zinc-finger fold. Arginine 261 acts as the Proton donor; for delta-elimination activity in catalysis.

It belongs to the FPG family. Monomer. Requires Zn(2+) as cofactor.

The enzyme catalyses Hydrolysis of DNA containing ring-opened 7-methylguanine residues, releasing 2,6-diamino-4-hydroxy-5-(N-methyl)formamidopyrimidine.. The catalysed reaction is 2'-deoxyribonucleotide-(2'-deoxyribose 5'-phosphate)-2'-deoxyribonucleotide-DNA = a 3'-end 2'-deoxyribonucleotide-(2,3-dehydro-2,3-deoxyribose 5'-phosphate)-DNA + a 5'-end 5'-phospho-2'-deoxyribonucleoside-DNA + H(+). Functionally, involved in base excision repair of DNA damaged by oxidation or by mutagenic agents. Acts as a DNA glycosylase that recognizes and removes damaged bases. Has a preference for oxidized purines, such as 7,8-dihydro-8-oxoguanine (8-oxoG). Has AP (apurinic/apyrimidinic) lyase activity and introduces nicks in the DNA strand. Cleaves the DNA backbone by beta-delta elimination to generate a single-strand break at the site of the removed base with both 3'- and 5'-phosphates. The polypeptide is Formamidopyrimidine-DNA glycosylase (Legionella pneumophila (strain Paris)).